Reading from the N-terminus, the 399-residue chain is S-adenosylmethionine synthase (399 aa).

ATP is bound at residue 135-140 (GEGSTD).

The protein belongs to the AdoMet synthase 2 family. Mg(2+) serves as cofactor.

The catalysed reaction is L-methionine + ATP + H2O = S-adenosyl-L-methionine + phosphate + diphosphate. The protein operates within amino-acid biosynthesis; S-adenosyl-L-methionine biosynthesis; S-adenosyl-L-methionine from L-methionine: step 1/1. Functionally, catalyzes the formation of S-adenosylmethionine from methionine and ATP. In Archaeoglobus fulgidus (strain ATCC 49558 / DSM 4304 / JCM 9628 / NBRC 100126 / VC-16), this protein is S-adenosylmethionine synthase (mat).